A 430-amino-acid polypeptide reads, in one-letter code: Tyrosine--tRNA ligase (430 aa).

Residue tyrosine 32 coordinates L-tyrosine. The 'HIGH' region signature appears at 37-46; it reads PTADSLHIGH. L-tyrosine is bound by residues tyrosine 172 and glutamine 176. Residues 232 to 236 carry the 'KMSKS' region motif; that stretch reads KFGKT. Lysine 235 contacts ATP. Residues 362–429 form the S4 RNA-binding domain; that stretch reads IKAVDLCTEK…GKKNYYLLIA (68 aa).

It belongs to the class-I aminoacyl-tRNA synthetase family. TyrS type 1 subfamily. In terms of assembly, homodimer.

It is found in the cytoplasm. The catalysed reaction is tRNA(Tyr) + L-tyrosine + ATP = L-tyrosyl-tRNA(Tyr) + AMP + diphosphate + H(+). Functionally, catalyzes the attachment of tyrosine to tRNA(Tyr) in a two-step reaction: tyrosine is first activated by ATP to form Tyr-AMP and then transferred to the acceptor end of tRNA(Tyr). This Parabacteroides distasonis (strain ATCC 8503 / DSM 20701 / CIP 104284 / JCM 5825 / NCTC 11152) protein is Tyrosine--tRNA ligase.